Reading from the N-terminus, the 693-residue chain is Golgin subfamily A member 6A (693 aa).

Residues 14–611 (LEESRQNKLA…KLLELQELVL (598 aa)) are a coiled coil. 3 disordered regions span residues 20-69 (NKLA…PGDS), 497-547 (LPGE…GTEQ), and 661-693 (NVEP…MQDT). A compositionally biased stretch (polar residues) spans 54-69 (SPETTTSGGCHSPGDS). Positions 537–547 (LPKEKADGTEQ) are enriched in basic and acidic residues. Residues 676-693 (DNPTVQQIVQLSPVMQDT) show a composition bias toward polar residues.

The protein belongs to the GOLGA6 family. As to expression, highly expressed in seminiferous tubes in testis. Highly expressed in spermatids, barely detectable in late pachytene spermatocytes, and not detectable in spermatogonia. Detected at intermediate levels in pancreas and lymph nodes, and at much lower levels in spleen, peripheral blood leukocytes, skeletal muscle, liver, lung, placenta, brain and heart.

In Homo sapiens (Human), this protein is Golgin subfamily A member 6A (GOLGA6A).